We begin with the raw amino-acid sequence, 742 residues long: Two pore calcium channel protein 1 (742 aa).

Residues 1–37 (MSEAEAPLITEEAAERGLASSGSRRLSDGAGGQGSRK) are disordered. Residues 1–82 (MSEAEAPLIT…NDTRFGRAMS (82 aa)) lie on the Cytoplasmic side of the membrane. A helical membrane pass occupies residues 83-103 (FYFVYLRLDWLWSLNLFALIL). At 104-140 (LNFLEKPLWCRKDALQAYDQRDLYFLGQLPYFSKTES) the chain is on the extracellular side. A helical transmembrane segment spans residues 141–161 (LIYEGLTLVILVMDIFCPLSY). Residues 162–176 (EGLNIFWRSTTNKLK) are Cytoplasmic-facing. Residues 177-197 (IVLLFILACDILVFAFSSQPF) traverse the membrane as a helical segment. The Extracellular portion of the chain corresponds to 198 to 204 (RLAPYIR). A helical; Voltage-sensor membrane pass occupies residues 205-226 (VVFLIMTIRELRMCAITLAGLI). The chain crosses the membrane as a helical span at residues 227–247 (GTYLNVLALSLLFLLFASWLA). Topologically, residues 248 to 258 (YVTFEDTPQGK) are extracellular. Positions 259–273 (TIFSSYGVTLYQMFV) form an intramembrane region, pore-forming. Over 274–296 (LFTTSNNPDVWVHAYKIPRWYSL) the chain is Extracellular. The helical transmembrane segment at 297–317 (FFIVYVLLGVYFLTNLILAVI) threads the bilayer. Topologically, residues 318–446 (YDSFKEQFAK…SFVRSRMFEY (129 aa)) are cytoplasmic. 2 EF-hand domains span residues 335–370 (IRKNILQKAFDLIDTNNRGYLDREQCISLLNELNKY) and 376–411 (TSREDFELIFAELDRSGDFKVTSEEFADLCNTIAIK). A helical transmembrane segment spans residues 447 to 467 (IIVFVLLINLVAVIIETTLDI). Residues 468 to 480 (ENSSSQETWQEVE) lie on the Extracellular side of the membrane. Asn469 is a glycosylation site (N-linked (GlcNAc...) asparagine). Residues 481–501 (FFLGWIYVAEMALKIFSLGFG) form a helical membrane-spanning segment. Over 502-510 (AYWMEGQNK) the chain is Cytoplasmic. Residues 511 to 531 (FDFVLTWTIFIGETLTFAFPS) traverse the membrane as a helical segment. Residues 532-540 (KLPFLSNGE) are Extracellular-facing. A helical; Voltage-sensor transmembrane segment spans residues 541–558 (WIRYLLLGRVLRLTRILL). Over 559–582 (QVQRFRAFVATFFTLMSSLMPYLG) the chain is Cytoplasmic. The helical transmembrane segment at 583-603 (IVFCVLCMYCSIGLQIFGGIV) threads the bilayer. Residues 604 to 627 (YAGNPTLEETDLFNNDYLLFNFND) lie on the Extracellular side of the membrane. Residues 628 to 642 (YPSGMVTLFNLLVMG) constitute an intramembrane region (pore-forming). The Extracellular segment spans residues 643 to 663 (NWQVWMESYWQLTGTSWSLIY). A helical transmembrane segment spans residues 664–684 (FVSFYLISILLLLNLIVAFVL). The Cytoplasmic segment spans residues 685–742 (EAFFAEMELEKGEEVDIQNPTSGGIKKRRSMRVRSKGTMVDILLHHMLSNELDGSQNS).

It belongs to the calcium channel alpha-1 subunit (TC 1.A.1.11) family. Two pore calcium channel subfamily. Homodimer.

It is found in the membrane. With respect to regulation, inhibited by Al(3+). In terms of biological role, functions as a voltage-gated inward-rectifying Ca(2+) channel (VDCC) across the plasma membrane that mediates sucrose-induced Ca(2+) influx in autotrophically grown leaf cells. Acts as the major ROS-responsive Ca(2+) channel and is the possible target of Al-dependent inhibition. Plays a regulatory role in defense responses. The chain is Two pore calcium channel protein 1 (TPC1) from Triticum aestivum (Wheat).